A 315-amino-acid chain; its full sequence is Methionyl-tRNA formyltransferase (315 aa).

Ser113 to Pro116 is a binding site for (6S)-5,6,7,8-tetrahydrofolate.

Belongs to the Fmt family.

It carries out the reaction L-methionyl-tRNA(fMet) + (6R)-10-formyltetrahydrofolate = N-formyl-L-methionyl-tRNA(fMet) + (6S)-5,6,7,8-tetrahydrofolate + H(+). Attaches a formyl group to the free amino group of methionyl-tRNA(fMet). The formyl group appears to play a dual role in the initiator identity of N-formylmethionyl-tRNA by promoting its recognition by IF2 and preventing the misappropriation of this tRNA by the elongation apparatus. This is Methionyl-tRNA formyltransferase from Pectobacterium carotovorum subsp. carotovorum (strain PC1).